The following is a 517-amino-acid chain: 2,3-bisphosphoglycerate-independent phosphoglycerate mutase 1 (517 aa).

Mn(2+) is bound by residues aspartate 17 and serine 67. Serine 67 acts as the Phosphoserine intermediate in catalysis. Residues histidine 128, 158 to 159 (RD), arginine 190, arginine 196, 267 to 270 (RPDR), and lysine 340 contribute to the substrate site. Mn(2+) contacts are provided by aspartate 407, histidine 411, aspartate 448, histidine 449, and histidine 467.

The protein belongs to the BPG-independent phosphoglycerate mutase family. It depends on Mn(2+) as a cofactor.

It carries out the reaction (2R)-2-phosphoglycerate = (2R)-3-phosphoglycerate. It participates in carbohydrate degradation; glycolysis; pyruvate from D-glyceraldehyde 3-phosphate: step 3/5. Functionally, catalyzes the interconversion of 2-phosphoglycerate and 3-phosphoglycerate. This is 2,3-bisphosphoglycerate-independent phosphoglycerate mutase 1 from Methanosarcina barkeri (strain Fusaro / DSM 804).